A 545-amino-acid polypeptide reads, in one-letter code: CTP synthase (545 aa).

Residues 1–266 (MTTRYIFVTG…DDLVTKRFGL (266 aa)) form an amidoligase domain region. Residue Ser-14 participates in CTP binding. A UTP-binding site is contributed by Ser-14. Residues 15-20 (SLGKGI) and Asp-72 each bind ATP. 2 residues coordinate Mg(2+): Asp-72 and Glu-140. Residues 147–149 (DIE), 187–192 (KTKPTQ), and Lys-223 each bind CTP. UTP contacts are provided by residues 187–192 (KTKPTQ) and Lys-223. 239 to 241 (KDV) contacts ATP. In terms of domain architecture, Glutamine amidotransferase type-1 spans 291 to 542 (TIGMVGKYTE…VAAAVAYQKR (252 aa)). Gly-352 is an L-glutamine binding site. Cys-379 serves as the catalytic Nucleophile; for glutamine hydrolysis. L-glutamine-binding positions include 380 to 383 (LGMQ), Glu-403, and Arg-470. Catalysis depends on residues His-515 and Glu-517.

Belongs to the CTP synthase family. In terms of assembly, homotetramer.

The catalysed reaction is UTP + L-glutamine + ATP + H2O = CTP + L-glutamate + ADP + phosphate + 2 H(+). It catalyses the reaction L-glutamine + H2O = L-glutamate + NH4(+). The enzyme catalyses UTP + NH4(+) + ATP = CTP + ADP + phosphate + 2 H(+). Its pathway is pyrimidine metabolism; CTP biosynthesis via de novo pathway; CTP from UDP: step 2/2. Its activity is regulated as follows. Allosterically activated by GTP, when glutamine is the substrate; GTP has no effect on the reaction when ammonia is the substrate. The allosteric effector GTP functions by stabilizing the protein conformation that binds the tetrahedral intermediate(s) formed during glutamine hydrolysis. Inhibited by the product CTP, via allosteric rather than competitive inhibition. Catalyzes the ATP-dependent amination of UTP to CTP with either L-glutamine or ammonia as the source of nitrogen. Regulates intracellular CTP levels through interactions with the four ribonucleotide triphosphates. The sequence is that of CTP synthase from Shewanella loihica (strain ATCC BAA-1088 / PV-4).